A 126-amino-acid chain; its full sequence is Large ribosomal subunit protein bL19 (126 aa).

This sequence belongs to the bacterial ribosomal protein bL19 family.

In terms of biological role, this protein is located at the 30S-50S ribosomal subunit interface and may play a role in the structure and function of the aminoacyl-tRNA binding site. This is Large ribosomal subunit protein bL19 from Dechloromonas aromatica (strain RCB).